Here is a 1136-residue protein sequence, read N- to C-terminus: DNA-directed RNA polymerase I subunit RPA2 (1136 aa).

Residues 1–24 (MDPGSRWRNLPSGPSLKHLTDPSY) are disordered. Arg-180 contacts RNA. The interval 194 to 208 (VRPKWKTRGPGYTHY) is loop B. Residues 236–247 (LNFIYRKELFFL) form a loop A region. Asp-367 is an RNA binding site. Fork loop regions lie at residues 439 to 453 (LRSK…DSGL) and 474 to 489 (RGAD…VRRL). Position 890 (Lys-890) interacts with RNA. Residues Arg-1020 and Arg-1036 each contribute to the DNA site. Position 1051 is a phosphoserine (Ser-1051). 4 residues coordinate Zn(2+): Cys-1071, Cys-1074, Cys-1099, and Cys-1102. The segment at 1071–1102 (CVKCGSLLSPLLEKPPPSWSAMRNRKYNCTLC) adopts a C4-type zinc-finger fold.

Belongs to the RNA polymerase beta chain family. Component of the RNA polymerase I (Pol I) complex consisting of 13 subunits: a ten-subunit catalytic core composed of POLR1A/RPA1, POLR1B/RPA2, POLR1C/RPAC1, POLR1D/RPAC2, POLR1H/RPA12, POLR2E/RPABC1, POLR2F/RPABC2, POLR2H/RPABC3, POLR2K/RPABC4 and POLR2L/RPABC5; a mobile stalk subunit POLR1F/RPA43 protruding from the core and additional subunits homologous to general transcription factors POLR1E/RPA49 and POLR1G/RPA34. Part of Pol I pre-initiation complex (PIC), in which Pol I core assembles with RRN3 and promoter-bound UTBF and SL1/TIF-IB complex.

It localises to the nucleus. It is found in the nucleolus. Its subcellular location is the chromosome. The catalysed reaction is RNA(n) + a ribonucleoside 5'-triphosphate = RNA(n+1) + diphosphate. Its function is as follows. Catalytic core component of RNA polymerase I (Pol I), a DNA-dependent RNA polymerase which synthesizes ribosomal RNA precursors using the four ribonucleoside triphosphates as substrates. Transcribes 47S pre-rRNAs from multicopy rRNA gene clusters, giving rise to 5.8S, 18S and 28S ribosomal RNAs. Pol I-mediated transcription cycle proceeds through transcription initiation, transcription elongation and transcription termination stages. During transcription initiation, Pol I pre-initiation complex (PIC) is recruited by the selectivity factor 1 (SL1/TIF-IB) complex bound to the core promoter that precedes an rDNA repeat unit. The PIC assembly bends the promoter favoring the formation of the transcription bubble and promoter escape. Once the polymerase has escaped from the promoter it enters the elongation phase during which RNA is actively polymerized, based on complementarity with the template DNA strand. Highly processive, assembles in structures referred to as 'Miller trees' where many elongating Pol I complexes queue and transcribe the same rDNA coding regions. At terminator sequences downstream of the rDNA gene, PTRF interacts with Pol I and halts Pol I transcription leading to the release of the RNA transcript and polymerase from the DNA. Forms Pol I active center together with the largest subunit POLR1A/RPA1. Appends one nucleotide at a time to the 3' end of the nascent RNA, with POLR1A/RPA1 contributing a Mg(2+)-coordinating DxDGD motif, and POLR1B/RPA2 providing lysine residues believed to facilitate Watson-Crick base pairing between the incoming nucleotide and the template base. Typically, Mg(2+) ions direct a 5' nucleoside triphosphate to form a phosphodiester bond with the 3' hydroxyl of the preceding nucleotide of the nascent RNA, with the elimination of pyrophosphate. Has proofreading activity: Pauses and backtracks to allow the cleavage of a missincorporated nucleotide via POLR1H/RPA12. High Pol I processivity is associated with decreased transcription fidelity. This Pongo abelii (Sumatran orangutan) protein is DNA-directed RNA polymerase I subunit RPA2 (POLR1B).